The chain runs to 38 residues: Photosystem II reaction center protein L (38 aa).

The helical transmembrane segment at 17–37 (SLYWGLLLIFVLAVLFSNYFF) threads the bilayer.

It belongs to the PsbL family. PSII is composed of 1 copy each of membrane proteins PsbA, PsbB, PsbC, PsbD, PsbE, PsbF, PsbH, PsbI, PsbJ, PsbK, PsbL, PsbM, PsbT, PsbX, PsbY, PsbZ, Psb30/Ycf12, at least 3 peripheral proteins of the oxygen-evolving complex and a large number of cofactors. It forms dimeric complexes.

It localises to the plastid. The protein localises to the chloroplast thylakoid membrane. One of the components of the core complex of photosystem II (PSII). PSII is a light-driven water:plastoquinone oxidoreductase that uses light energy to abstract electrons from H(2)O, generating O(2) and a proton gradient subsequently used for ATP formation. It consists of a core antenna complex that captures photons, and an electron transfer chain that converts photonic excitation into a charge separation. This subunit is found at the monomer-monomer interface and is required for correct PSII assembly and/or dimerization. The polypeptide is Photosystem II reaction center protein L (Antirrhinum majus (Garden snapdragon)).